The sequence spans 201 residues: Small ribosomal subunit protein uS4 (201 aa).

The 64-residue stretch at A92–L155 folds into the S4 RNA-binding domain.

Belongs to the universal ribosomal protein uS4 family. Part of the 30S ribosomal subunit. Contacts protein S5. The interaction surface between S4 and S5 is involved in control of translational fidelity.

One of the primary rRNA binding proteins, it binds directly to 16S rRNA where it nucleates assembly of the body of the 30S subunit. Its function is as follows. With S5 and S12 plays an important role in translational accuracy. The polypeptide is Small ribosomal subunit protein uS4 (Phocaeicola vulgatus (strain ATCC 8482 / DSM 1447 / JCM 5826 / CCUG 4940 / NBRC 14291 / NCTC 11154) (Bacteroides vulgatus)).